We begin with the raw amino-acid sequence, 325 residues long: Probable cell division protein WhiA (325 aa).

The segment at residues 280-313 (SLKELGNMLEKPLGKSGVNHRLRKIDKIAEELRK) is a DNA-binding region (H-T-H motif).

Belongs to the WhiA family.

Its function is as follows. Involved in cell division and chromosome segregation. This Caldicellulosiruptor bescii (strain ATCC BAA-1888 / DSM 6725 / KCTC 15123 / Z-1320) (Anaerocellum thermophilum) protein is Probable cell division protein WhiA.